The primary structure comprises 256 residues: Thiazole synthase (256 aa).

K95 acts as the Schiff-base intermediate with DXP in catalysis. 1-deoxy-D-xylulose 5-phosphate-binding positions include G156, A182 to G183, and N204 to T205.

Belongs to the ThiG family. As to quaternary structure, homotetramer. Forms heterodimers with either ThiH or ThiS.

The protein resides in the cytoplasm. It catalyses the reaction [ThiS sulfur-carrier protein]-C-terminal-Gly-aminoethanethioate + 2-iminoacetate + 1-deoxy-D-xylulose 5-phosphate = [ThiS sulfur-carrier protein]-C-terminal Gly-Gly + 2-[(2R,5Z)-2-carboxy-4-methylthiazol-5(2H)-ylidene]ethyl phosphate + 2 H2O + H(+). Its pathway is cofactor biosynthesis; thiamine diphosphate biosynthesis. Catalyzes the rearrangement of 1-deoxy-D-xylulose 5-phosphate (DXP) to produce the thiazole phosphate moiety of thiamine. Sulfur is provided by the thiocarboxylate moiety of the carrier protein ThiS. In vitro, sulfur can be provided by H(2)S. This is Thiazole synthase from Vibrio cholerae serotype O1 (strain ATCC 39541 / Classical Ogawa 395 / O395).